Reading from the N-terminus, the 73-residue chain is Antimicrobial peptide TsAP-1 (73 aa).

Positions 1-22 are cleaved as a signal peptide; that stretch reads MQIKHLITLFFLVLIVADQCSA. Lysine amide is present on K39. The propeptide occupies 45 to 73; sequence EISAQIEQYKDLQKREAELEELLDRLPMY.

As to expression, expressed by the venom gland.

The protein localises to the secreted. In terms of biological role, has a low antimicrobial activity against S.aureus, E.coli, and C.albicans (MICs 120-160 uM). Has a low hemolytic activity (4% at 160 uM). Also inhibits the growth of two cancer cell lines on a total of five (the squamous carcinoma cell line H157 (IC(50)=55.9 uM) and the lung adenocarcinoma cell line H838 (IC(50)=52.5 uM)). This is Antimicrobial peptide TsAP-1 from Tityus serrulatus (Brazilian scorpion).